The primary structure comprises 622 residues: TAF6-like RNA polymerase II p300/CBP-associated factor-associated factor 65 kDa subunit 6L (622 aa).

2 disordered regions span residues 403 to 430 (QESS…GPED) and 457 to 546 (GTGQ…TRDV). Phosphoserine is present on residues S495 and S501. Residues 511-522 (ASASGPAASESR) are compositionally biased toward low complexity. Asymmetric dimethylarginine occurs at positions 555, 561, and 593.

The protein belongs to the TAF6 family. As to quaternary structure, the PCAF complex is composed of a number of TBP-associated factors (TAFS), such as TAF5, TAF5L, TAF6, TAF6L, TAF9, TAF10 and TAF12, PCAF, and also PCAF-associated factors (PAFs), such as TADA2L/ADA2, TADA3L/ADA3 and SPT3. Component of the STAGA transcription coactivator-HAT complex, at least composed of SUPT3H, GCN5L2, TAF5L, TAF6L, SUPT7L, TADA3L, TAD1L, TAF10, TAF12, TRRAP and TAF9.

It is found in the nucleus. Its function is as follows. Functions as a component of the PCAF complex. The PCAF complex is capable of efficiently acetylating histones in a nucleosomal context. The PCAF complex could be considered as the human version of the yeast SAGA complex. With TAF5L, acts as an epigenetic regulator essential for somatic reprogramming. Regulates target genes through H3K9ac deposition and MYC recruitment which trigger MYC regulatory network to orchestrate gene expression programs to control embryonic stem cell state. Functions with MYC to activate target gene expression through RNA polymerase II pause release. This chain is TAF6-like RNA polymerase II p300/CBP-associated factor-associated factor 65 kDa subunit 6L, found in Homo sapiens (Human).